We begin with the raw amino-acid sequence, 430 residues long: MENPFEITNVIAREILDSRGNPTVEVEVYTPISMGRAAVPSGASTGTHEALELRDGGSRYHGKGVRRAVENVNKIIAPEIIGMDVTWQRDIDTLMLELDGTENKSNLGANAILGVSLAVAKAAANALGLPLYQYIGGTNAYVMPVPMSNVINGGVHAGNELDFQEFMIMPVGADSFREAIRWVSETYHVLKKVIMEKYGRNAVNVGDEGGFAPPMKEVTEPLDVLIKAIEEAGYKPGDEIAFALDAASSEFFDGEKGKYVVAGKEYDKGELLELYRELVTTYPIVSIEDPFHEEDWEGFVMITKELGSKVQIVGDDLFVTNPKRIRKGIEMGAANALLLKVNQIGTLSEAIDAAYTSFRAGYGVVVSHRSGETEDATIADLAVALNAGQIKTGAPARSDRNAKYNQLIRIEEELEGIAVYPGKKFRNPFL.

Glutamine 164 lines the (2R)-2-phosphoglycerate pocket. Residue glutamate 208 is the Proton donor of the active site. Mg(2+)-binding residues include aspartate 245, glutamate 288, and aspartate 315. Residues lysine 340, arginine 369, serine 370, and lysine 391 each contribute to the (2R)-2-phosphoglycerate site. Catalysis depends on lysine 340, which acts as the Proton acceptor.

It belongs to the enolase family. It depends on Mg(2+) as a cofactor.

The protein localises to the cytoplasm. Its subcellular location is the secreted. It is found in the cell surface. It catalyses the reaction (2R)-2-phosphoglycerate = phosphoenolpyruvate + H2O. It participates in carbohydrate degradation; glycolysis; pyruvate from D-glyceraldehyde 3-phosphate: step 4/5. Its function is as follows. Catalyzes the reversible conversion of 2-phosphoglycerate (2-PG) into phosphoenolpyruvate (PEP). It is essential for the degradation of carbohydrates via glycolysis. This chain is Enolase, found in Thermococcus kodakarensis (strain ATCC BAA-918 / JCM 12380 / KOD1) (Pyrococcus kodakaraensis (strain KOD1)).